The following is a 153-amino-acid chain: Mitochondrial fission 1 protein (153 aa).

At 1–124 (MTQLPYAVDA…LIDDKVTKEG (124 aa)) the chain is on the cytoplasmic side. The TPR repeat unit spans residues 73–106 (RECLYYLALGNYKLGNYAQARKYNDALLENEPAN). Residues 125–145 (LMGVAIISGVAVAAGVIGGVL) form a helical membrane-spanning segment. Over 146–153 (LRNLGRKR) the chain is Mitochondrial intermembrane.

Belongs to the FIS1 family.

The protein localises to the mitochondrion outer membrane. Has a role in mitochondrial fission. Has a role in outer membrane fission but not matrix separation. This Neurospora crassa (strain ATCC 24698 / 74-OR23-1A / CBS 708.71 / DSM 1257 / FGSC 987) protein is Mitochondrial fission 1 protein (mtp-2).